The following is a 486-amino-acid chain: Ribulose bisphosphate carboxylase large chain, plasmid (486 aa).

Asn-126 and Thr-176 together coordinate substrate. Residue Lys-178 is the Proton acceptor of the active site. Position 180 (Lys-180) interacts with substrate. Mg(2+) contacts are provided by Lys-204, Asp-206, and Glu-207. Position 204 is an N6-carboxylysine (Lys-204). His-296 functions as the Proton acceptor in the catalytic mechanism. Substrate contacts are provided by Arg-297, His-329, and Ser-381.

The protein belongs to the RuBisCO large chain family. Type I subfamily. As to quaternary structure, heterohexadecamer of 8 large chains and 8 small chains. The cofactor is Mg(2+).

The enzyme catalyses 2 (2R)-3-phosphoglycerate + 2 H(+) = D-ribulose 1,5-bisphosphate + CO2 + H2O. It carries out the reaction D-ribulose 1,5-bisphosphate + O2 = 2-phosphoglycolate + (2R)-3-phosphoglycerate + 2 H(+). Its function is as follows. RuBisCO catalyzes two reactions: the carboxylation of D-ribulose 1,5-bisphosphate, the primary event in carbon dioxide fixation, as well as the oxidative fragmentation of the pentose substrate. Both reactions occur simultaneously and in competition at the same active site. This is Ribulose bisphosphate carboxylase large chain, plasmid (cbbL2) from Cupriavidus necator (strain ATCC 17699 / DSM 428 / KCTC 22496 / NCIMB 10442 / H16 / Stanier 337) (Ralstonia eutropha).